The following is a 354-amino-acid chain: Probable tartrate dehydrogenase/decarboxylase (354 aa).

Mn(2+) contacts are provided by aspartate 221, aspartate 245, and aspartate 249.

The protein belongs to the isocitrate and isopropylmalate dehydrogenases family. Mg(2+) is required as a cofactor. Mn(2+) serves as cofactor. The cofactor is K(+).

It catalyses the reaction tartrate + NAD(+) = 2-hydroxy-3-oxosuccinate + NADH + H(+). It carries out the reaction (2R,3S)-tartrate + NAD(+) = 2-hydroxy-3-oxosuccinate + NADH + H(+). The catalysed reaction is (2R,3R)-tartrate + NAD(+) = 2-hydroxy-3-oxosuccinate + NADH + H(+). The enzyme catalyses (2R,3R)-tartrate + H(+) = (R)-glycerate + CO2. It catalyses the reaction (R)-malate + NAD(+) = pyruvate + CO2 + NADH. Functionally, has multiple catalytic activities. Apart from catalyzing the oxidation of (+)-tartrate to oxaloglycolate, also converts meso-tartrate to D-glycerate and catalyzes the oxidative decarboxylation of D-malate to pyruvate. This is Probable tartrate dehydrogenase/decarboxylase (ycsA) from Bacillus subtilis (strain 168).